We begin with the raw amino-acid sequence, 135 residues long: L-ectoine synthase (135 aa).

The protein belongs to the ectoine synthase family.

It carries out the reaction (2S)-4-acetamido-2-aminobutanoate = L-ectoine + H2O. The protein operates within amine and polyamine biosynthesis; ectoine biosynthesis; L-ectoine from L-aspartate 4-semialdehyde: step 3/3. Functionally, catalyzes the circularization of gamma-N-acetyl-alpha,gamma-diaminobutyric acid (ADABA) to ectoine (1,4,5,6-tetrahydro-2-methyl-4-pyrimidine carboxylic acid), which is an excellent osmoprotectant. This chain is L-ectoine synthase, found in Saccharopolyspora erythraea (strain ATCC 11635 / DSM 40517 / JCM 4748 / NBRC 13426 / NCIMB 8594 / NRRL 2338).